The following is a 160-amino-acid chain: Transcriptional regulator MraZ (160 aa).

SpoVT-AbrB domains follow at residues 5-50 (NFET…DGGY) and 93-136 (AVEC…SQAE).

This sequence belongs to the MraZ family. In terms of assembly, forms oligomers.

The protein resides in the cytoplasm. Its subcellular location is the nucleoid. The chain is Transcriptional regulator MraZ from Geotalea daltonii (strain DSM 22248 / JCM 15807 / FRC-32) (Geobacter daltonii).